A 258-amino-acid chain; its full sequence is Coiled-coil domain-containing protein 127 (258 aa).

Positions Lys-50–Ile-170 form a coiled coil.

The sequence is that of Coiled-coil domain-containing protein 127 (CCDC127) from Sus scrofa (Pig).